Consider the following 275-residue polypeptide: NH(3)-dependent NAD(+) synthetase (275 aa).

ATP is bound at residue 46 to 53; sequence GISGGQDS. A Mg(2+)-binding site is contributed by Asp52. Residue Arg140 coordinates deamido-NAD(+). Thr160 contacts ATP. Glu165 contributes to the Mg(2+) binding site. Residues Lys173 and Asp180 each coordinate deamido-NAD(+). The ATP site is built by Lys189 and Thr211. 260-261 serves as a coordination point for deamido-NAD(+); it reads HK.

The protein belongs to the NAD synthetase family. As to quaternary structure, homodimer.

It catalyses the reaction deamido-NAD(+) + NH4(+) + ATP = AMP + diphosphate + NAD(+) + H(+). It participates in cofactor biosynthesis; NAD(+) biosynthesis; NAD(+) from deamido-NAD(+) (ammonia route): step 1/1. Its function is as follows. Catalyzes the ATP-dependent amidation of deamido-NAD to form NAD. Uses ammonia as a nitrogen source. This is NH(3)-dependent NAD(+) synthetase from Escherichia coli O45:K1 (strain S88 / ExPEC).